Consider the following 465-residue polypeptide: Siroheme synthase (465 aa).

The segment at 1-203 (MDFLPLFHSL…GRPAEAERLL (203 aa)) is precorrin-2 dehydrogenase /sirohydrochlorin ferrochelatase. Residues 22–23 (EV) and 43–44 (PQ) contribute to the NAD(+) site. A Phosphoserine modification is found at Ser-128. Residues 217-465 (GEVYLVGAGP…AWFEGAREGA (249 aa)) are uroporphyrinogen-III C-methyltransferase. S-adenosyl-L-methionine is bound at residue Pro-226. Asp-249 serves as the catalytic Proton acceptor. Lys-271 functions as the Proton donor in the catalytic mechanism. S-adenosyl-L-methionine contacts are provided by residues 302–304 (GGD), Ile-307, 332–333 (TA), Met-384, and Gly-413.

In the N-terminal section; belongs to the precorrin-2 dehydrogenase / sirohydrochlorin ferrochelatase family. The protein in the C-terminal section; belongs to the precorrin methyltransferase family.

The enzyme catalyses uroporphyrinogen III + 2 S-adenosyl-L-methionine = precorrin-2 + 2 S-adenosyl-L-homocysteine + H(+). It catalyses the reaction precorrin-2 + NAD(+) = sirohydrochlorin + NADH + 2 H(+). The catalysed reaction is siroheme + 2 H(+) = sirohydrochlorin + Fe(2+). It participates in cofactor biosynthesis; adenosylcobalamin biosynthesis; precorrin-2 from uroporphyrinogen III: step 1/1. Its pathway is cofactor biosynthesis; adenosylcobalamin biosynthesis; sirohydrochlorin from precorrin-2: step 1/1. The protein operates within porphyrin-containing compound metabolism; siroheme biosynthesis; precorrin-2 from uroporphyrinogen III: step 1/1. It functions in the pathway porphyrin-containing compound metabolism; siroheme biosynthesis; siroheme from sirohydrochlorin: step 1/1. It participates in porphyrin-containing compound metabolism; siroheme biosynthesis; sirohydrochlorin from precorrin-2: step 1/1. Functionally, multifunctional enzyme that catalyzes the SAM-dependent methylations of uroporphyrinogen III at position C-2 and C-7 to form precorrin-2 via precorrin-1. Then it catalyzes the NAD-dependent ring dehydrogenation of precorrin-2 to yield sirohydrochlorin. Finally, it catalyzes the ferrochelation of sirohydrochlorin to yield siroheme. This is Siroheme synthase from Pseudomonas paraeruginosa (strain DSM 24068 / PA7) (Pseudomonas aeruginosa (strain PA7)).